The primary structure comprises 1956 residues: Sodium channel protein type 10 subunit alpha (1956 aa).

Residues 1–125 are Cytoplasmic-facing; the sequence is MEFPIGSLET…FNLIRRTAIK (125 aa). A disordered region spans residues 27–54; sequence QIAAKQGTKKAREKHREQKDQEEKPRPQ. Basic and acidic residues predominate over residues 40 to 54; that stretch reads KHREQKDQEEKPRPQ. The stretch at 116-405 is one I repeat; that stretch reads FNLIRRTAIK…VTMAYEEQNQ (290 aa). A helical membrane pass occupies residues 126–149; sequence VSVHSWFSLFITVTILVNCVCMTR. The Extracellular segment spans residues 150-154; the sequence is TDLPE. The helical transmembrane segment at 155–174 threads the bilayer; that stretch reads KIEYVFTVIYTFEALIKILA. Residues 175–187 lie on the Cytoplasmic side of the membrane; that stretch reads RGFCLNEFTYLRD. The chain crosses the membrane as a helical span at residues 188–206; sequence PWNWLDFSVITLAYVGTAI. The Extracellular segment spans residues 207 to 212; it reads DLRGIS. A helical; Voltage-sensor membrane pass occupies residues 213–232; that stretch reads GLRTFRVLRALKTVSVIPGL. The Cytoplasmic portion of the chain corresponds to 233 to 248; that stretch reads KVIVGALIHSVKKLAD. A helical transmembrane segment spans residues 249–272; sequence VTILTIFCLSVFALVGLQLFKGNL. The Extracellular segment spans residues 273-341; that stretch reads KNKCVKNDMA…PDFNYTSFDS (69 aa). C276 and C319 are disulfide-bonded. 4 N-linked (GlcNAc...) asparagine glycosylation sites follow: N284, N288, N312, and N335. An intramembrane region (pore-forming) is located at residues 342-366; that stretch reads FAWAFLSLFRLMTQDSWERLYQQTL. Topologically, residues 367–373 are extracellular; that stretch reads RTSGKIY. The helical transmembrane segment at 374 to 399 threads the bilayer; it reads MIFFVLVIFLGSFYLVNLILAVVTMA. At 400–659 the chain is on the cytoplasmic side; sequence YEEQNQATTD…MWVKLKTILF (260 aa). Phosphoserine is present on residues S441, S444, S467, and S479. Polar residues predominate over residues 443–454; the sequence is HSHNGSPLTSKN. Disordered regions lie at residues 443–485 and 500–580; these read HSHN…YNQR and SHGS…LAPG. Positions 561–570 are enriched in basic and acidic residues; it reads DSRHGEDEHQ. Phosphoserine occurs at positions 612 and 615. One copy of the II repeat lies at 647–911; the sequence is CCPMWVKLKT…EDDGEVNNLQ (265 aa). The chain crosses the membrane as a helical span at residues 660–684; that stretch reads GLVTDPFAELTITLCIVVNTIFMAM. The Extracellular segment spans residues 685-695; the sequence is EHHGMSPTFEA. Residues 696 to 719 form a helical membrane-spanning segment; that stretch reads MLQIGNIVFTIFFTAEMVFKIIAF. The Cytoplasmic portion of the chain corresponds to 720-727; that stretch reads DPYYYFQK. Residues 728-747 traverse the membrane as a helical segment; that stretch reads KWNIFDCIIVTVSLLELGVA. The Extracellular segment spans residues 748–753; the sequence is KKGSLS. Residues 754-773 form a helical; Voltage-sensor membrane-spanning segment; the sequence is VLRSFRLLRVFKLAKSWPTL. Over 774–789 the chain is Cytoplasmic; it reads NTLIKIIGNSVGALGN. A helical transmembrane segment spans residues 790–810; the sequence is LTIILAIIVFVFALVGKQLLG. Residues 811-834 lie on the Extracellular side of the membrane; the sequence is ENYRNNRKNISAPHEDWPRWHMHD. N-linked (GlcNAc...) asparagine glycosylation is present at N819. The pore-forming intramembrane region spans 835–855; it reads FFHSFLIVFRILCGEWIENMW. Residues 856–864 lie on the Extracellular side of the membrane; sequence ACMEVGQKS. A disulfide bridge connects residues C857 and C866. A helical membrane pass occupies residues 865-890; it reads ICLILFLTVMVLGNLVVLNLFIALLL. The Cytoplasmic segment spans residues 891–1147; sequence NSFSADNLTA…GWQVRKTCYR (257 aa). Disordered stretches follow at residues 963-986 and 1041-1089; these read AANTARGSSGGLQAPRGPRDEHSD and DHLT…GSTV. The stretch at 1140 to 1449 is one III repeat; it reads QVRKTCYRIV…KKYYNAMKKL (310 aa). Residues 1148-1171 form a helical membrane-spanning segment; that stretch reads IVEHSWFESFIIFMILLSSGSLAF. Over 1172–1184 the chain is Extracellular; it reads EDYYLDQKPTVKA. A helical transmembrane segment spans residues 1185-1210; that stretch reads LLEYTDRVFTFIFVFEMLLKWVAYGF. At 1211–1216 the chain is on the cytoplasmic side; sequence KKYFTN. Residues 1217–1238 form a helical membrane-spanning segment; the sequence is AWCWLDFLIVNISLISLTAKIL. The Extracellular segment spans residues 1239 to 1242; the sequence is EYSE. The helical; Voltage-sensor transmembrane segment at 1243 to 1264 threads the bilayer; sequence VAPIKALRTLRALRPLRALSRF. At 1265–1283 the chain is on the cytoplasmic side; that stretch reads EGMRVVVDALVGAIPSIMN. A helical membrane pass occupies residues 1284-1311; sequence VLLVCLIFWLIFSIMGVNLFAGKFWRCI. N-linked (GlcNAc...) asparagine glycans are attached at residues N1312, N1328, and N1336. Topologically, residues 1312 to 1353 are extracellular; sequence NYTDGEFSLVPLSIVNNKSDCKIQNSTGSFFWVNVKVNFDNV. The segment at residues 1354–1375 is an intramembrane region (pore-forming); the sequence is AMGYLALLQVATFKGWMDIMYA. At 1376 to 1391 the chain is on the extracellular side; sequence AVDSREVNMQPKWEDN. A helical transmembrane segment spans residues 1392–1418; that stretch reads VYMYLYFVIFIIFGGFFTLNLFVGVII. The Cytoplasmic segment spans residues 1419 to 1471; sequence DNFNQQKKKLGGQDIFMTEEQKKYYNAMKKLGSKKPQKPIPRPLNKFQGFVFD. At S1451 the chain carries Phosphoserine; by PKC. An IV repeat occupies 1458–1757; that stretch reads IPRPLNKFQG…WEKFDPEATQ (300 aa). A helical membrane pass occupies residues 1472–1495; the sequence is IVTRQAFDITIMVLICLNMITMMV. Over 1496–1506 the chain is Extracellular; it reads ETDDQSEEKTK. Residues 1507-1530 form a helical membrane-spanning segment; that stretch reads ILGKINQFFVAVFTGECVMKMFAL. Residues 1531-1536 are Cytoplasmic-facing; it reads RQYYFT. A helical transmembrane segment spans residues 1537-1560; sequence NGWNVFDFIVVVLSIASLIFSAIL. Topologically, residues 1561-1572 are extracellular; the sequence is KSLQSYFSPTLF. Residues 1573–1594 traverse the membrane as a helical; Voltage-sensor segment; sequence RVIRLARIGRILRLIRAAKGIR. At 1595 to 1609 the chain is on the cytoplasmic side; it reads TLLFALMMSLPALFN. The chain crosses the membrane as a helical span at residues 1610 to 1632; the sequence is IGLLLFLVMFIYSIFGMSSFPHV. Topologically, residues 1633–1646 are extracellular; sequence RWEAGIDDMFNFQT. The pore-forming intramembrane region spans 1647–1669; the sequence is FANSMLCLFQITTSAGWDGLLSP. At 1670 to 1697 the chain is on the extracellular side; it reads ILNTGPPYCDPNLPNSNGTRGDCGSPAV. An N-linked (GlcNAc...) asparagine glycan is attached at N1686. The chain crosses the membrane as a helical span at residues 1698-1722; the sequence is GIIFFTTYIIISFLIMVNMYIAVIL. Residues 1723 to 1956 are Cytoplasmic-facing; the sequence is ENFNVATEES…TSMELIAPGP (234 aa). Residues 1851–1880 enclose the IQ domain; the sequence is EDISATVIQKAYRSYVLHRSMALSNTPCVP. Positions 1909 to 1956 are disordered; the sequence is SETASATSFPPSYESVTRGLSDRVNMRTSSSIQNEDEATSMELIAPGP.

Belongs to the sodium channel (TC 1.A.1.10) family. Nav1.8/SCN10A subfamily. As to quaternary structure, the channel consists of an ion conducting pore forming alpha-subunit regulated by one or more associated auxiliary subunits SCN1B, SCN2B and SCN3B; electrophysiological properties may vary depending on the type of the associated beta subunits. Found in a number of complexes with PRX, DYNLT1 and PDZD2. Interacts with proteins such as FSTL1, PRX, DYNLT1, PDZD2, S100A10 and many others. Interacts with NEDD4 and NEDD4L. Ubiquitinated by NEDD4L; which promotes its endocytosis. Post-translationally, phosphorylation at Ser-1451 by PKC in a highly conserved cytoplasmic loop slows inactivation of the sodium channel and reduces peak sodium currents. In terms of processing, lacks the cysteine which covalently binds the conotoxin GVIIJ. This cysteine (position 816) is speculated in other sodium channel subunits alpha to be implied in covalent binding with the sodium channel subunit beta-2 or beta-4. Expressed in the dorsal root ganglia and sciatic nerve.

It localises to the cell membrane. The enzyme catalyses Na(+)(in) = Na(+)(out). Functionally, tetrodotoxin-resistant channel that mediates the voltage-dependent sodium ion permeability of excitable membranes. Assuming opened or closed conformations in response to the voltage difference across the membrane, the protein forms a sodium-selective channel through which sodium ions may pass in accordance with their electrochemical gradient. Plays a role in neuropathic pain mechanisms. The polypeptide is Sodium channel protein type 10 subunit alpha (Homo sapiens (Human)).